The following is a 162-amino-acid chain: MNKTKVLYPGSFDPITNGHMDIIERSAKIFEEVNVAVVKNIQKKSTFTLEQRVEMIEKACKHLSNVKIHQFEGLTVDFAKQIGCSTIIRGLRAVSDFESEMQMSLANKKLNDELETLFLVADGKYAFLSSSIVREIASYGADISELVPENIVEDIKQRFNDK.

Position 11 (Ser-11) interacts with substrate. ATP contacts are provided by residues 11–12 (SF) and His-19. Positions 43, 75, and 89 each coordinate substrate. ATP is bound by residues 90–92 (GLR), Glu-100, and 125–131 (YAFLSSS).

It belongs to the bacterial CoaD family. As to quaternary structure, homohexamer. The cofactor is Mg(2+).

The protein resides in the cytoplasm. The catalysed reaction is (R)-4'-phosphopantetheine + ATP + H(+) = 3'-dephospho-CoA + diphosphate. It participates in cofactor biosynthesis; coenzyme A biosynthesis; CoA from (R)-pantothenate: step 4/5. In terms of biological role, reversibly transfers an adenylyl group from ATP to 4'-phosphopantetheine, yielding dephospho-CoA (dPCoA) and pyrophosphate. The sequence is that of Phosphopantetheine adenylyltransferase from Finegoldia magna (strain ATCC 29328 / DSM 20472 / WAL 2508) (Peptostreptococcus magnus).